The following is a 791-amino-acid chain: RAS guanyl-releasing protein 1 (791 aa).

Positions 49 to 172 (LGKLSKGASL…RLIDTAQINS (124 aa)) constitute an N-terminal Ras-GEF domain. Residues 53–106 (SKGASLDELIQMCIQAFDLDGNMGQNNELLQIMLTMHGFLIPSTELLIKLRTLY) form a ras exchanger motif region; required for transforming activity region. The 232-residue stretch at 201 to 432 (EPQELAEHLT…YELSYAREPR (232 aa)) folds into the Ras-GEF domain. 2 EF-hand domains span residues 466 to 501 (HVQRMVDSVFKNYDLDQDGYISQEEFEKIAASFPFS) and 502 to 528 (FCVMDKDREGLISRQEITAYFMRASSI). The Ca(2+) site is built by D479, D481, D483, Y485, E490, D506, D508, E510, and E517. The Phorbol-ester/DAG-type zinc-finger motif lies at 537–587 (LHNFQETTYLRPTFCDNCAGFLWGVIKQGYRCKDCGMNCHKQCKELVVFEC). The segment at 671 to 715 (TQTENETQSLCLQVPSPPRSRTPDLTSHLPISPMPSPCPSPVPTR) is disordered. Residues 672–681 (QTENETQSLC) show a composition bias toward polar residues. A compositionally biased stretch (pro residues) spans 702 to 712 (SPMPSPCPSPV). A coiled-coil region spans residues 728-783 (IRKARAELRGGKAGIQELEKEKVFLKEENTALKIQLKDAHRRVETLRAELRKYVLD).

Belongs to the RASGRP family.

It localises to the cytoplasm. The protein resides in the cytosol. It is found in the cell membrane. Its subcellular location is the golgi apparatus membrane. The protein localises to the endoplasmic reticulum membrane. Its activity is regulated as follows. Regulated by F-actin polymerization and probably by calcium. Its function is as follows. Functions as a diacylglycerol (DAG)-regulated nucleotide exchange factor specifically activating Ras through the exchange of bound GDP for GTP. The sequence is that of RAS guanyl-releasing protein 1 (rasgrp1) from Xenopus laevis (African clawed frog).